An 89-amino-acid polypeptide reads, in one-letter code: Small ribosomal subunit protein uS19 (89 aa).

This sequence belongs to the universal ribosomal protein uS19 family.

Its function is as follows. Protein S19 forms a complex with S13 that binds strongly to the 16S ribosomal RNA. The chain is Small ribosomal subunit protein uS19 from Rhodopirellula baltica (strain DSM 10527 / NCIMB 13988 / SH1).